A 689-amino-acid chain; its full sequence is Protein asunder (689 aa).

Positions 521–550 form a coiled coil; it reads NGARLKLSKAKDQYRLLYRELEQLIQLNAT. Disordered stretches follow at residues 591 to 619 and 669 to 689; these read SPER…SKRR and KDAV…SVRS. A compositionally biased stretch (low complexity) spans 599–614; it reads SSVGASGSSNSNSLLK. Residues 613 to 619 carry the Nuclear localization signal (NLS) motif; it reads LKASKRR.

It belongs to the Integrator subunit 13 family. As to quaternary structure, belongs to the multiprotein complex Integrator, at least composed of IntS1, IntS2, IntS3, IntS4, omd/IntS5, IntS6, defl/IntS7, IntS8, IntS9, IntS10, IntS11, IntS12, asun/IntS13, IntS14 and IntS15. The core complex associates with protein phosphatase 2A subunits mts/PP2A and Pp2A-29B, to form the Integrator-PP2A (INTAC) complex. In terms of processing, phosphorylated.

It is found in the nucleus. The protein localises to the cytoplasm. It localises to the perinuclear region. Functionally, component of the integrator complex, a multiprotein complex that terminates RNA polymerase II (Pol II) transcription in the promoter-proximal region of genes. The integrator complex provides a quality checkpoint during transcription elongation by driving premature transcription termination of transcripts that are unfavorably configured for transcriptional elongation: the complex terminates transcription by (1) catalyzing dephosphorylation of the C-terminal domain (CTD) of Pol II subunit Polr2A/Rbp1 and Spt5, and (2) degrading the exiting nascent RNA transcript via endonuclease activity. The integrator complex is also involved in the 3'-end processing of the U7 snRNA, and also the spliceosomal snRNAs U1, U2, U4 and U5. The protein is Protein asunder (asun) of Drosophila simulans (Fruit fly).